Here is a 262-residue protein sequence, read N- to C-terminus: Nurim (262 aa).

At 1–4 (MAPA) the chain is on the nuclear side. Residues 5–28 (LLLVPAALASFILAFGTGVEFVRF) form a helical membrane-spanning segment. Over 29 to 58 (TSLRPLLGGIPESGGPDARQGWLAALQDRS) the chain is Perinuclear space. Residues 59-80 (ILAPLAWDLGLLLLFVGQHSLM) traverse the membrane as a helical segment. Topologically, residues 81-97 (AAERVKAWTSRYFGVLQ) are nuclear. The helical transmembrane segment at 98-114 (RSLYVACTALALQLVMR) threads the bilayer. At 115-133 (YWEPIPKGPVLWEARAEPW) the chain is on the perinuclear space side. The chain crosses the membrane as a helical span at residues 134-164 (ATWVPLLCFVLHVISWLLIFSILLVFDYAEL). At 165-191 (MGLKQVYYHVLGLGEPLALKSPRALRL) the chain is on the nuclear side. A helical membrane pass occupies residues 192 to 210 (FSHLRHPVCVELLTVLWVV). The Perinuclear space segment spans residues 211–216 (PTLGTD). Residues 217–234 (RLLLAFLLTLYLGLAHGL) form a helical membrane-spanning segment. Residues 235 to 262 (DQQDLRYLRAQLQRKLHLLSRPQDGEAE) are Nuclear-facing.

This sequence belongs to the nurim family.

The protein resides in the nucleus inner membrane. The chain is Nurim (NRM) from Pan troglodytes (Chimpanzee).